Consider the following 279-residue polypeptide: HTH-type transcriptional regulator HdfR (279 aa).

One can recognise an HTH lysR-type domain in the interval 1-58 (MDTELLKTFLEVSRTRHFGRAAESLYLTQSAVSFRIRQLENQLGVNLFTRHRNNIRLT). Residues 18-37 (FGRAAESLYLTQSAVSFRIR) constitute a DNA-binding region (H-T-H motif).

This sequence belongs to the LysR transcriptional regulatory family.

Negatively regulates the transcription of the flagellar master operon flhDC by binding to the upstream region of the operon. The chain is HTH-type transcriptional regulator HdfR from Escherichia coli O7:K1 (strain IAI39 / ExPEC).